The primary structure comprises 449 residues: Methylenetetrahydrofolate--tRNA-(uracil-5-)-methyltransferase TrmFO (449 aa).

Residue 9–14 (GGGIAG) coordinates FAD.

It belongs to the MnmG family. TrmFO subfamily. FAD is required as a cofactor.

It is found in the cytoplasm. The enzyme catalyses uridine(54) in tRNA + (6R)-5,10-methylene-5,6,7,8-tetrahydrofolate + NADH + H(+) = 5-methyluridine(54) in tRNA + (6S)-5,6,7,8-tetrahydrofolate + NAD(+). It carries out the reaction uridine(54) in tRNA + (6R)-5,10-methylene-5,6,7,8-tetrahydrofolate + NADPH + H(+) = 5-methyluridine(54) in tRNA + (6S)-5,6,7,8-tetrahydrofolate + NADP(+). Catalyzes the folate-dependent formation of 5-methyl-uridine at position 54 (M-5-U54) in all tRNAs. The chain is Methylenetetrahydrofolate--tRNA-(uracil-5-)-methyltransferase TrmFO from Gloeobacter violaceus (strain ATCC 29082 / PCC 7421).